Here is a 982-residue protein sequence, read N- to C-terminus: Probable beta-galactosidase C (982 aa).

An N-terminal signal peptide occupies residues 1-21 (MRLFALLPVLLGLISSHFVSA). Positions 80, 125, 126, 127, and 185 each coordinate substrate. The active-site Proton donor is glutamate 186. Position 249 (tyrosine 249) interacts with substrate. Residues cysteine 255 and cysteine 302 are joined by a disulfide bond. A glycan (N-linked (GlcNAc...) asparagine) is linked at asparagine 274. Glutamate 285 functions as the Nucleophile in the catalytic mechanism. Position 351 (tyrosine 351) interacts with substrate. Residues asparagine 389, asparagine 434, asparagine 600, asparagine 675, asparagine 718, and asparagine 785 are each glycosylated (N-linked (GlcNAc...) asparagine).

This sequence belongs to the glycosyl hydrolase 35 family.

Its subcellular location is the secreted. It carries out the reaction Hydrolysis of terminal non-reducing beta-D-galactose residues in beta-D-galactosides.. Cleaves beta-linked terminal galactosyl residues from gangliosides, glycoproteins, and glycosaminoglycans. The sequence is that of Probable beta-galactosidase C (lacC) from Penicillium rubens (strain ATCC 28089 / DSM 1075 / NRRL 1951 / Wisconsin 54-1255) (Penicillium chrysogenum).